A 590-amino-acid chain; its full sequence is uncharacterized protein (590 aa).

2 disordered regions span residues 306–329 (IAEPQTHTGGADRQRPQRPDGIPY) and 528–590 (QPAP…LMNL). Residues 543 to 563 (PSLPQPVPEPLAPQEPPPPGT) are compositionally biased toward pro residues.

This is an uncharacterized protein from Ictaluridae (bullhead catfishes).